The sequence spans 325 residues: Natural cytotoxicity triggering receptor 1 (325 aa).

The first 16 residues, 1–16 (MLPTLTALLCLGLCLS), serve as a signal peptide directing secretion. The Extracellular portion of the chain corresponds to 17 to 258 (QRINTEKQTL…WDHTAQNLIR (242 aa)). 2 consecutive Ig-like domains span residues 42–100 (GNSV…TCFY) and 137–192 (GENV…RCFG). The cysteines at positions 49 and 98 are disulfide-linked. Asn-139 is a glycosylation site (N-linked (GlcNAc...) asparagine). Cys-144 and Cys-190 are disulfide-bonded. Asn-216 carries N-linked (GlcNAc...) asparagine glycosylation. A helical membrane pass occupies residues 259–279 (IGLACIIVMALVWLLAEDWLS). Residues 280–325 (RRKDHEKLNRLTSWECRGRRRMHRYHEEEQRDAISMRELKATPGDM) are Cytoplasmic-facing.

It belongs to the natural cytotoxicity receptor (NCR) family. In terms of assembly, interacts with CD3Z and FCER1G. Weakly expressed in spleen, heart and lung.

Its subcellular location is the cell membrane. Cytotoxicity-activating receptor that may contribute to the increased efficiency of activated natural killer (NK) cells to mediate tumor cell lysis. In Rattus norvegicus (Rat), this protein is Natural cytotoxicity triggering receptor 1 (Ncr1).